A 163-amino-acid polypeptide reads, in one-letter code: Probable chemoreceptor glutamine deamidase CheD (163 aa).

The protein belongs to the CheD family.

The enzyme catalyses L-glutaminyl-[protein] + H2O = L-glutamyl-[protein] + NH4(+). In terms of biological role, probably deamidates glutamine residues to glutamate on methyl-accepting chemotaxis receptors (MCPs), playing an important role in chemotaxis. The chain is Probable chemoreceptor glutamine deamidase CheD from Borrelia garinii subsp. bavariensis (strain ATCC BAA-2496 / DSM 23469 / PBi) (Borreliella bavariensis).